The sequence spans 166 residues: Large ribosomal subunit protein uL11 (166 aa).

Arginine 67 carries the N5-methylarginine modification.

Belongs to the universal ribosomal protein uL11 family.

The polypeptide is Large ribosomal subunit protein uL11 (RPL12) (Encephalitozoon cuniculi (strain GB-M1) (Microsporidian parasite)).